We begin with the raw amino-acid sequence, 389 residues long: Phosphopentomutase (389 aa).

Aspartate 9, aspartate 282, histidine 287, aspartate 323, histidine 324, and histidine 335 together coordinate Mn(2+).

Belongs to the phosphopentomutase family. It depends on Mn(2+) as a cofactor.

The protein resides in the cytoplasm. It catalyses the reaction 2-deoxy-alpha-D-ribose 1-phosphate = 2-deoxy-D-ribose 5-phosphate. The catalysed reaction is alpha-D-ribose 1-phosphate = D-ribose 5-phosphate. Its pathway is carbohydrate degradation; 2-deoxy-D-ribose 1-phosphate degradation; D-glyceraldehyde 3-phosphate and acetaldehyde from 2-deoxy-alpha-D-ribose 1-phosphate: step 1/2. In terms of biological role, isomerase that catalyzes the conversion of deoxy-ribose 1-phosphate (dRib-1-P) and ribose 1-phosphate (Rib-1-P) to deoxy-ribose 5-phosphate (dRib-5-P) and ribose 5-phosphate (Rib-5-P), respectively. This Pseudothermotoga lettingae (strain ATCC BAA-301 / DSM 14385 / NBRC 107922 / TMO) (Thermotoga lettingae) protein is Phosphopentomutase.